A 331-amino-acid chain; its full sequence is Flagellar P-ring protein (331 aa).

The first 25 residues, 1 to 25 (MKKRLAVLLVIVLTITFSFSVTTRI), serve as a signal peptide directing secretion.

Belongs to the FlgI family. The basal body constitutes a major portion of the flagellar organelle and consists of four rings (L,P,S, and M) mounted on a central rod.

It localises to the periplasm. It is found in the bacterial flagellum basal body. In terms of biological role, assembles around the rod to form the L-ring and probably protects the motor/basal body from shearing forces during rotation. In Thermotoga petrophila (strain ATCC BAA-488 / DSM 13995 / JCM 10881 / RKU-1), this protein is Flagellar P-ring protein.